A 258-amino-acid chain; its full sequence is Imidazole glycerol phosphate synthase subunit HisF (258 aa).

Residues D11 and D130 contribute to the active site.

This sequence belongs to the HisA/HisF family. In terms of assembly, heterodimer of HisH and HisF.

Its subcellular location is the cytoplasm. The catalysed reaction is 5-[(5-phospho-1-deoxy-D-ribulos-1-ylimino)methylamino]-1-(5-phospho-beta-D-ribosyl)imidazole-4-carboxamide + L-glutamine = D-erythro-1-(imidazol-4-yl)glycerol 3-phosphate + 5-amino-1-(5-phospho-beta-D-ribosyl)imidazole-4-carboxamide + L-glutamate + H(+). The protein operates within amino-acid biosynthesis; L-histidine biosynthesis; L-histidine from 5-phospho-alpha-D-ribose 1-diphosphate: step 5/9. In terms of biological role, IGPS catalyzes the conversion of PRFAR and glutamine to IGP, AICAR and glutamate. The HisF subunit catalyzes the cyclization activity that produces IGP and AICAR from PRFAR using the ammonia provided by the HisH subunit. In Blochmanniella pennsylvanica (strain BPEN), this protein is Imidazole glycerol phosphate synthase subunit HisF.